A 196-amino-acid polypeptide reads, in one-letter code: UMP-CMP kinase (196 aa).

Position 13–18 (G13–T18) interacts with ATP. Phosphoserine is present on S33. The tract at residues S33–V63 is NMP. R39 contributes to the a ribonucleoside 5'-phosphate binding site. 2 positions are modified to N6-acetyllysine: K43 and K55. A ribonucleoside 5'-phosphate-binding positions include K61–V63 and G93–R96. N100 is a CMP binding site. Position 106 is an N6-succinyllysine (K106). An LID region spans residues E133–D143. Residue R134 participates in ATP binding. The a ribonucleoside 5'-phosphate site is built by R140 and R151. K179 serves as a coordination point for ATP. Residue S180 is modified to Phosphoserine.

The protein belongs to the adenylate kinase family. UMP-CMP kinase subfamily. Monomer. It depends on Mg(2+) as a cofactor.

Its subcellular location is the nucleus. The protein localises to the cytoplasm. The enzyme catalyses CMP + ATP = CDP + ADP. The catalysed reaction is dCMP + ATP = dCDP + ADP. It catalyses the reaction UMP + ATP = UDP + ADP. It carries out the reaction a 2'-deoxyribonucleoside 5'-diphosphate + ATP = a 2'-deoxyribonucleoside 5'-triphosphate + ADP. The enzyme catalyses a ribonucleoside 5'-diphosphate + ATP = a ribonucleoside 5'-triphosphate + ADP. Catalyzes the phosphorylation of pyrimidine nucleoside monophosphates at the expense of ATP. Plays an important role in de novo pyrimidine nucleotide biosynthesis. Has preference for UMP and CMP as phosphate acceptors. Also displays broad nucleoside diphosphate kinase activity. The protein is UMP-CMP kinase of Sus scrofa (Pig).